The primary structure comprises 359 residues: RNA-binding protein 4B (359 aa).

2 RRM domains span residues 2–72 (VKLF…ASKN) and 78–148 (TKLH…LSTS). The CCHC-type zinc finger occupies 160 to 177 (SGCYRCGKEGHWSKECPV). The interaction with TNPO3 stretch occupies residues 196 to 359 (AVRPPYTMGY…YVDRARYSAF (164 aa)).

As to quaternary structure, interacts with TNPO3, which may mediate nuclear import of the protein.

The protein localises to the nucleus. Its subcellular location is the nucleolus. Functionally, required for the translational activation of PER1 mRNA in response to circadian clock. Binds directly to the 3'-UTR of the PER1 mRNA. This is RNA-binding protein 4B (RBM4B) from Sus scrofa (Pig).